The following is a 299-amino-acid chain: Acetylglutamate kinase (299 aa).

Substrate is bound by residues 72 to 73 (GG), arginine 94, and asparagine 196.

This sequence belongs to the acetylglutamate kinase family. ArgB subfamily.

The protein localises to the cytoplasm. The catalysed reaction is N-acetyl-L-glutamate + ATP = N-acetyl-L-glutamyl 5-phosphate + ADP. It participates in amino-acid biosynthesis; L-arginine biosynthesis; N(2)-acetyl-L-ornithine from L-glutamate: step 2/4. Functionally, catalyzes the ATP-dependent phosphorylation of N-acetyl-L-glutamate. The protein is Acetylglutamate kinase of Burkholderia mallei (strain NCTC 10247).